The primary structure comprises 101 residues: Large ribosomal subunit protein uL23 (101 aa).

The protein belongs to the universal ribosomal protein uL23 family. As to quaternary structure, part of the 50S ribosomal subunit. Contacts protein L29, and trigger factor when it is bound to the ribosome.

Functionally, one of the early assembly proteins it binds 23S rRNA. One of the proteins that surrounds the polypeptide exit tunnel on the outside of the ribosome. Forms the main docking site for trigger factor binding to the ribosome. This Haemophilus ducreyi (strain 35000HP / ATCC 700724) protein is Large ribosomal subunit protein uL23.